The chain runs to 70 residues: DNA gyrase inhibitor YacG (70 aa).

Zn(2+) contacts are provided by C9, C12, C28, and C32. Positions 43–70 (ESRKIPGSSIDPESIVTSNNKQDNVDEQ) are disordered.

Belongs to the DNA gyrase inhibitor YacG family. As to quaternary structure, interacts with GyrB. Zn(2+) is required as a cofactor.

In terms of biological role, inhibits all the catalytic activities of DNA gyrase by preventing its interaction with DNA. Acts by binding directly to the C-terminal domain of GyrB, which probably disrupts DNA binding by the gyrase. The polypeptide is DNA gyrase inhibitor YacG (Legionella pneumophila (strain Lens)).